We begin with the raw amino-acid sequence, 261 residues long: Thiazole synthase (261 aa).

Lys102 (schiff-base intermediate with DXP) is an active-site residue. 1-deoxy-D-xylulose 5-phosphate-binding positions include Gly163, 189-190 (AG), and 211-212 (NT).

It belongs to the ThiG family. As to quaternary structure, homotetramer. Forms heterodimers with either ThiH or ThiS.

It localises to the cytoplasm. It catalyses the reaction [ThiS sulfur-carrier protein]-C-terminal-Gly-aminoethanethioate + 2-iminoacetate + 1-deoxy-D-xylulose 5-phosphate = [ThiS sulfur-carrier protein]-C-terminal Gly-Gly + 2-[(2R,5Z)-2-carboxy-4-methylthiazol-5(2H)-ylidene]ethyl phosphate + 2 H2O + H(+). The protein operates within cofactor biosynthesis; thiamine diphosphate biosynthesis. Its function is as follows. Catalyzes the rearrangement of 1-deoxy-D-xylulose 5-phosphate (DXP) to produce the thiazole phosphate moiety of thiamine. Sulfur is provided by the thiocarboxylate moiety of the carrier protein ThiS. In vitro, sulfur can be provided by H(2)S. The chain is Thiazole synthase from Acinetobacter baumannii (strain AB307-0294).